Reading from the N-terminus, the 374-residue chain is Protein TAB2 homolog, chloroplastic (374 aa).

Residues 1 to 64 constitute a chloroplast transit peptide; the sequence is MATLGFNTRR…SLSITKEQEV (64 aa). The interval 58 to 84 is disordered; the sequence is ITKEQEVANEVEEDDPTSELSYLDPES. A compositionally biased stretch (acidic residues) spans 64 to 74; sequence VANEVEEDDPT.

It localises to the plastid. Its subcellular location is the chloroplast. In terms of biological role, nuclear genome-encoded A/U-rich RNA-binding protein involved in the biogenesis of photosystem I (PSI) and II (PSII). Required for the light-controlled accumulation of PSI and PSII during early plant development. Does not seem to be required for the translation of mRNAs of the PSI subunits. This chain is Protein TAB2 homolog, chloroplastic, found in Arabidopsis thaliana (Mouse-ear cress).